We begin with the raw amino-acid sequence, 75 residues long: Large ribosomal subunit protein bL31 (75 aa).

Zn(2+)-binding residues include cysteine 16, cysteine 18, cysteine 37, and cysteine 40.

Belongs to the bacterial ribosomal protein bL31 family. Type A subfamily. Part of the 50S ribosomal subunit. It depends on Zn(2+) as a cofactor.

In terms of biological role, binds the 23S rRNA. This Legionella pneumophila (strain Paris) protein is Large ribosomal subunit protein bL31.